Reading from the N-terminus, the 159-residue chain is Olfactory receptor-like protein COR8 (159 aa).

Over 1-16 (VAICNPLLYTISMPKS) the chain is Cytoplasmic. A helical membrane pass occupies residues 17 to 41 (LCMKLVAGSYLGGVLNSLTQTCCLL). Over 42 to 82 (PLPFCGPNVINHYFCDTNPLLKLTCSDGRLNELLLVTFNGT) the chain is Extracellular. N-linked (GlcNAc...) asparagine glycosylation is present at asparagine 80. The helical transmembrane segment at 83-103 (ISMTVLLIIVISYVYILVSIL) threads the bilayer. The Cytoplasmic portion of the chain corresponds to 104-116 (SIRSARGRHKAFS). Residues 117-137 (TCASHLLTVTLFYVPAGLSHM) form a helical membrane-spanning segment. At 138 to 148 (QPGSKYSLDME) the chain is on the extracellular side. A helical membrane pass occupies residues 149-159 (KVTAVFYTLLV).

This sequence belongs to the G-protein coupled receptor 1 family.

The protein resides in the cell membrane. In terms of biological role, odorant receptor. The protein is Olfactory receptor-like protein COR8 (COR8) of Gallus gallus (Chicken).